Here is a 150-residue protein sequence, read N- to C-terminus: Large ribosomal subunit protein bL9 (150 aa).

This sequence belongs to the bacterial ribosomal protein bL9 family.

Binds to the 23S rRNA. In Hamiltonella defensa subsp. Acyrthosiphon pisum (strain 5AT), this protein is Large ribosomal subunit protein bL9.